Here is a 248-residue protein sequence, read N- to C-terminus: 23S rRNA (guanosine(2553)-2'-O)-methyltransferase RlmP (248 aa).

4 residues coordinate S-adenosyl-L-methionine: R123, G204, V224, and L233.

It belongs to the class IV-like SAM-binding methyltransferase superfamily. RNA methyltransferase TrmH family. Homodimer.

The protein resides in the cytoplasm. It catalyses the reaction guanosine(2553) in 23S rRNA + S-adenosyl-L-methionine = 2'-O-methylguanosine(2553) in 23S rRNA + S-adenosyl-L-homocysteine + H(+). Specifically methylates the ribose of guanosine 2553 (G2553) in 23S rRNA. When the target G2553 is mutated, is able to methylate the ribose of adenosine, but it cannot methylate cytidine nor uridine. Modifies free 23S rRNA but not the fully assembled ribosome nor the 50S subunit, suggesting that the modification occurs early during ribosome biogenesis. The polypeptide is 23S rRNA (guanosine(2553)-2'-O)-methyltransferase RlmP (Bacillus subtilis (strain 168)).